Here is a 123-residue protein sequence, read N- to C-terminus: MDNKTYEISSAEWEVMNIIWMKKYASANNIIEEIQMQRDWSPKTIRTLITRLYKKGFIDRKKDNKIFQYYSLVEESDIKYKTSKNFINKVYKGGFNSLVLNFVEKEDLSQDEIEELRNILNKK.

Residues 7-71 (EISSAEWEVM…KDNKIFQYYS (65 aa)) constitute a DNA-binding region (H-T-H motif). Residues 74–123 (EESDIKYKTSKNFINKVYKGGFNSLVLNFVEKEDLSQDEIEELRNILNKK) form an important for dimerization region.

The protein belongs to the BlaI transcriptional regulatory family. In terms of assembly, monomer and homodimer. In terms of processing, upon exposure to beta-lactams, proteolytic cleavage at a single site impairs dimerization and abolishes repressor activity.

The protein resides in the cytoplasm. Transcriptional repressor that constitutively blocks the transcription of the gene for the penicillin-binding protein MecA. Binds DNA as a dimer. The polypeptide is Methicillin resistance regulatory protein MecI (mecI) (Mammaliicoccus sciuri (Staphylococcus sciuri)).